We begin with the raw amino-acid sequence, 118 residues long: Acetylcholine receptor subunit beta (118 aa).

The signal sequence occupies residues 1-15 (APTVALLLLCALCSA).

It belongs to the ligand-gated ion channel (TC 1.A.9) family. Acetylcholine receptor (TC 1.A.9.1) subfamily. Beta-1/CHRNB1 sub-subfamily. Pentamer of two alpha chains, and one each of the beta, delta, and gamma chains.

The protein localises to the postsynaptic cell membrane. It is found in the cell membrane. The enzyme catalyses K(+)(in) = K(+)(out). The catalysed reaction is Na(+)(in) = Na(+)(out). Functionally, after binding acetylcholine, the AChR responds by an extensive change in conformation that affects all subunits and leads to opening of an ion-conducting channel across the plasma membrane. The sequence is that of Acetylcholine receptor subunit beta (CHRNB1) from Gallus gallus (Chicken).